We begin with the raw amino-acid sequence, 55 residues long: Regulatory protein MokB (55 aa).

Functionally, overlapping regulatory peptide whose translation enables hokB expression. This Escherichia coli (strain K12) protein is Regulatory protein MokB (mokB).